A 352-amino-acid chain; its full sequence is Peptide chain release factor 1 (352 aa).

Q229 carries the post-translational modification N5-methylglutamine.

The protein belongs to the prokaryotic/mitochondrial release factor family. Post-translationally, methylated by PrmC. Methylation increases the termination efficiency of RF1.

The protein resides in the cytoplasm. Its function is as follows. Peptide chain release factor 1 directs the termination of translation in response to the peptide chain termination codons UAG and UAA. The sequence is that of Peptide chain release factor 1 from Granulibacter bethesdensis (strain ATCC BAA-1260 / CGDNIH1).